The following is a 183-amino-acid chain: I-kappa-B like protein N2 (183 aa).

ANK repeat units lie at residues 62 to 95 (DGNT…DLNL) and 99 to 129 (CHKP…NLEA). Residues 163–183 (PRQDGSSEDEVSDSEEKSDSE) form a disordered region.

It belongs to the polydnaviridae I-Kappa-B like protein family.

Its function is as follows. Suppresses the host immune response through NF-kappa-B inactivation. Possesses ankyrin repeat domains required for NF-kappa-B binding but lacks the regulatory regions required for dissociation from NF-kappa-B and degradation. Therefore, prevents host NF-kappa-B release and subsequent activation. In Microplitis demolitor (Parasitoid wasp), this protein is I-kappa-B like protein N2 (N5).